Consider the following 389-residue polypeptide: Acetyl-CoA decarbonylase/synthase complex subunit delta (389 aa).

It belongs to the CdhD family. In terms of assembly, heterodimer of delta and gamma chains. The ACDS complex is made up of alpha, epsilon, beta, gamma and delta chains with a probable stoichiometry of (alpha(2)epsilon(2))(4)-beta(8)-(gamma(1)delta(1))(8).

Functionally, part of a complex that catalyzes the reversible cleavage of acetyl-CoA, allowing autotrophic growth from CO(2). Probably maintains the overall quaternary structure of the ACDS complex. This is Acetyl-CoA decarbonylase/synthase complex subunit delta from Methanothermobacter thermautotrophicus (strain ATCC 29096 / DSM 1053 / JCM 10044 / NBRC 100330 / Delta H) (Methanobacterium thermoautotrophicum).